We begin with the raw amino-acid sequence, 411 residues long: Common plant regulatory factor 1 (411 aa).

Residues 1-14 (MGNTDDVKAVKPEK) are compositionally biased toward basic and acidic residues. Disordered stretches follow at residues 1–30 (MGNT…SNSH), 130–197 (AMSI…SSVI), and 232–293 (SSLE…KQAE). Residues 148 to 164 (TLSQSKETEGSSDGSNE) are compositionally biased toward polar residues. Positions 235 to 244 (ELKDSPKEHA) are enriched in basic and acidic residues. The segment covering 249–259 (AGGQQPSTMMP) has biased composition (polar residues). The span at 264–293 (LHNDRDLKRERRKQSNRESARRSRLRKQAE) shows a compositional bias: basic and acidic residues. Residues 269–332 (DLKRERRKQS…EKLTNDNSRL (64 aa)) enclose the bZIP domain. The interval 271 to 290 (KRERRKQSNRESARRSRLRK) is basic motif. The tract at residues 297-332 (LAIKVDSLTAENMALKAEINRLTLTAEKLTNDNSRL) is leucine-zipper. Positions 346–411 (DVGLGNNNEK…NPRTDAVAAG (66 aa)) are disordered.

The protein belongs to the bZIP family. In terms of assembly, binds DNA as a dimer.

It is found in the nucleus. In terms of biological role, binds to the G-box-like motif (5'-ACGTGGC-3') of the chalcone synthase (CHS) gene promoter. G-box and G-box-like motifs are defined in promoters of certain plant genes which are regulated by such diverse stimuli as light-induction or hormone control. The sequence is that of Common plant regulatory factor 1 (CPRF1) from Petroselinum crispum (Parsley).